The sequence spans 501 residues: Prostacyclin synthase (501 aa).

The chain crosses the membrane as a helical span at residues 1–21 (MSWAALLGLLAVLLLLLLLLS). Residues Arg107, Leu113, Asn288, 359-360 (TR), and Arg383 contribute to the substrate site. Residue Cys442 coordinates heme.

It belongs to the cytochrome P450 family. It depends on heme as a cofactor.

It localises to the endoplasmic reticulum membrane. The catalysed reaction is prostaglandin H2 = prostaglandin I2. It catalyses the reaction a hydroperoxyeicosatetraenoate = an oxoeicosatetraenoate + H2O. It carries out the reaction (15S)-hydroperoxy-(5Z,8Z,11Z,13E)-eicosatetraenoate = 15-oxo-(5Z,8Z,11Z,13E)-eicosatetraenoate + H2O. The enzyme catalyses (15S)-hydroperoxy-(5Z,8Z,11Z,13E)-eicosatetraenoate + AH2 = (15S)-hydroxy-(5Z,8Z,11Z,13E)-eicosatetraenoate + A + H2O. Functionally, catalyzes the biosynthesis and metabolism of eicosanoids. Catalyzes the isomerization of prostaglandin H2 to prostacyclin (= prostaglandin I2), a potent mediator of vasodilation and inhibitor of platelet aggregation. Additionally, displays dehydratase activity, toward hydroperoxyeicosatetraenoates (HPETEs), especially toward (15S)-hydroperoxy-(5Z,8Z,11Z,13E)-eicosatetraenoate (15(S)-HPETE). This Rattus norvegicus (Rat) protein is Prostacyclin synthase (Ptgis).